A 94-amino-acid chain; its full sequence is Conotoxin Gla-MrII (94 aa).

The signal sequence occupies residues 1–25 (MFGHTSVSFLLLSIVALGMVATVIC). 5 positions are modified to 4-carboxyglutamate: Glu-30, Glu-34, Glu-37, Glu-40, and Glu-41. Residues 78–94 (STHMQKRFLRMPRDLAD) constitute a propeptide that is removed on maturation.

The protein belongs to the conotoxin I2 superfamily. In terms of processing, contains 4 disulfide bonds. As to expression, expressed by the venom duct.

The protein localises to the secreted. This Conus marmoreus (Marble cone) protein is Conotoxin Gla-MrII.